The chain runs to 429 residues: MTGKSVKDVDRYQAVLANLLLEEDNKFCADCQSKGPRWASWNIGVFICIRCAGIHRNLGVHISRVKSVNLDQWTQEQIQCMQEMGNGKANRLYEAYLPETFRRPQIDHAVEGFIRDKYEKKKYMDRSLDINAFRKEKDNKWKRGSEPAPEKKMEPVVFEKVKMPQKKEDPQLPRKTSPKSKAPVVDLLGLDAPVSCSIANGKTSNTLEKDLDLLASVSSPSSSVSRKVVGSMPTPGSAGSVPENLNLFPEPGSKSEETSKKQLSKDSILSLYGSQTPQMPTQAMFMAPAQMAYPTAYPSFPGVTPPNSLMGSMMPPPVGMVAQPGASGMVAPMAMPAGYMGGMQASMMGVPNGMMTTQQASYMAGMAAMPQTMYGVQPAQQLQWNLTQMTQQMAGMNFCGTNGMLSYGQSMNGGNGQAANQTLSPQMWK.

Residues 13–137 (QAVLANLLLE…LDINAFRKEK (125 aa)) enclose the Arf-GAP domain. Residues 28-51 (CADCQSKGPRWASWNIGVFICIRC) form a C4-type zinc finger. Ser-127 bears the Phosphoserine mark. Residues 138–172 (DNKWKRGSEPAPEKKMEPVVFEKVKMPQKKEDPQL) show a composition bias toward basic and acidic residues. Disordered stretches follow at residues 138-181 (DNKW…PKSK) and 217-263 (VSSP…KKQL). Residues 163 to 232 (MPQKKEDPQL…SVSRKVVGSM (70 aa)) form an interaction with clathrin heavy chains region. A compositionally biased stretch (low complexity) spans 217–231 (VSSPSSSVSRKVVGS). Phosphoserine is present on residues Ser-219, Ser-223, Ser-225, Ser-231, and Ser-240. The span at 253–263 (SKSEETSKKQL) shows a compositional bias: basic and acidic residues. The segment at 340 to 429 (MGGMQASMMG…NQTLSPQMWK (90 aa)) is interaction with PICALM.

Interacts with ARF1. Interacts with PICALM and clathrin heavy chains.

Its subcellular location is the cytoplasm. Functionally, GTPase activating protein that acts on ARF1. Can also activate ARF6 (in vitro). May play a role in clathrin-dependent retrograde transport from early endosomes to the trans-Golgi network. The protein is Stromal membrane-associated protein 2 (SMAP2) of Bos taurus (Bovine).